The chain runs to 176 residues: Nucleoside triphosphate/diphosphate phosphatase (176 aa).

R23 functions as the Proton donor in the catalytic mechanism. Mg(2+) contacts are provided by N87, D103, D105, D107, D120, and E123.

Belongs to the Ntdp family. Requires Mg(2+) as cofactor.

It catalyses the reaction a ribonucleoside 5'-triphosphate + H2O = a ribonucleoside 5'-diphosphate + phosphate + H(+). It carries out the reaction a ribonucleoside 5'-diphosphate + H2O = a ribonucleoside 5'-phosphate + phosphate + H(+). Has nucleoside phosphatase activity towards nucleoside triphosphates and nucleoside diphosphates. The polypeptide is Nucleoside triphosphate/diphosphate phosphatase (yjjG) (Lactococcus lactis subsp. lactis (strain IL1403) (Streptococcus lactis)).